The chain runs to 309 residues: Aspartate carbamoyltransferase catalytic subunit (309 aa).

Residues R48 and T49 each coordinate carbamoyl phosphate. K76 contacts L-aspartate. Carbamoyl phosphate contacts are provided by R98, H128, and Q131. R161 and R211 together coordinate L-aspartate. Residues A250 and P251 each contribute to the carbamoyl phosphate site.

It belongs to the aspartate/ornithine carbamoyltransferase superfamily. ATCase family. In terms of assembly, heterododecamer (2C3:3R2) of six catalytic PyrB chains organized as two trimers (C3), and six regulatory PyrI chains organized as three dimers (R2).

The enzyme catalyses carbamoyl phosphate + L-aspartate = N-carbamoyl-L-aspartate + phosphate + H(+). The protein operates within pyrimidine metabolism; UMP biosynthesis via de novo pathway; (S)-dihydroorotate from bicarbonate: step 2/3. Functionally, catalyzes the condensation of carbamoyl phosphate and aspartate to form carbamoyl aspartate and inorganic phosphate, the committed step in the de novo pyrimidine nucleotide biosynthesis pathway. The protein is Aspartate carbamoyltransferase catalytic subunit of Oceanobacillus iheyensis (strain DSM 14371 / CIP 107618 / JCM 11309 / KCTC 3954 / HTE831).